A 201-amino-acid polypeptide reads, in one-letter code: Probable GTP-binding protein EngB (201 aa).

Residues 21–191 form the EngB-type G domain; it reads AAPQIILAGR…WNLLDVTAIP (171 aa). Residues 29 to 36, 56 to 60, 75 to 78, 142 to 145, and 168 to 172 contribute to the GTP site; these read GRSNVGKS, GKTRS, DLPG, TKSD, and ICVSS. Residues Ser36 and Thr58 each coordinate Mg(2+).

Belongs to the TRAFAC class TrmE-Era-EngA-EngB-Septin-like GTPase superfamily. EngB GTPase family. Requires Mg(2+) as cofactor.

Functionally, necessary for normal cell division and for the maintenance of normal septation. The protein is Probable GTP-binding protein EngB of Maridesulfovibrio salexigens (strain ATCC 14822 / DSM 2638 / NCIMB 8403 / VKM B-1763) (Desulfovibrio salexigens).